A 125-amino-acid chain; its full sequence is Small ribosomal subunit protein bS6 (125 aa).

The disordered stretch occupies residues 94 to 125 (KAETGASSMMKTVEREEARKASQAEFAASNER). Residues 105–115 (TVEREEARKAS) show a composition bias toward basic and acidic residues.

The protein belongs to the bacterial ribosomal protein bS6 family.

In terms of biological role, binds together with bS18 to 16S ribosomal RNA. The chain is Small ribosomal subunit protein bS6 from Acidovorax ebreus (strain TPSY) (Diaphorobacter sp. (strain TPSY)).